A 971-amino-acid polypeptide reads, in one-letter code: MELSDANLQTLTEYLKKTLDPDPAIRRPAEKFLESVEGNQNYPLLLLTLLEKSQDNVIKVCASVTFKNYIKRNWRIVEDEPNKICEADRVAIKANIVHLMLSSPEQIQKQLSDAISIIGREDFPQKWPDLLTEMVNRFQSGDFHVINGVLRTAHSLFKRYRHEFKSNELWTEIKLVLDAFALPLTNLFKATIELCSTHANDASALRILFSSLILISKLFYSLNFQDLPEFFEDNMETWMNNFHTLLTLDNKLLQTDDEEEAGLLELLKSQICDNAALYAQKYDEEFQRYLPRFVTAIWNLLVTTGREVKYDLLVSNAIQFLASVCERPHYKNLFEDQNTLTSICEKVIVPNMEFRAADEEAFEDNSEEYIRRDLEGSDIDTRRRAACDLVRGLCKFFEGPVTGIFSGYVNSMLQEYAKNPSVNWKHKDAAIYLVTSLASKAQTQKHGITQANELVNLTEFFVNHILPDLKSNNVNEFPVLKADGIKYIMIFRNQVPKEHLLVSIPLLISHLEAESIVVHTYAAHALERLFTMRGSNNTTLFTAAEIAPFVEILLTNLFKALTLPGSSENEYIMKAIMRSFSLLQEAIIPYIPTLITQLTQKLLAVSKNPSKPHFNHYMFEAICLSIRITCKANPAAVVNFEEALFLVFTEILQNDVQEFIPYVFQVMSLLLETHKNDIPSSYMALFPHLLQPVLWERTGNIPALVRLLQAFLERGSSTIATAAADKIPGLLGVFQKLIASKANDHQGFYLLNSIIEHMPPESVDQYRKQIFILLFQRLQNSKTTKFIKSFLVFINLYCIKYGALALQEIFDGIQPKMFGMVLEKIIIPEIQKVSGNVEKKICAVGITKLLTECPPMMDTEYTKLWTPLLQSLIGLFELPEDDSIPDEEHFIDIEDTPGYQTAFSQLAFAGKKEHDPVGQMVNNPKIHLAQSLHKLSTACPGRVPSMVSTSLNAEALQYLQGYLQAASVTLL.

Methionine 1 bears the N-acetylmethionine mark. Positions 29 to 102 (AEKFLESVEG…KANIVHLMLS (74 aa)) constitute an Importin N-terminal domain. Serine 112 is modified (phosphoserine). 2 positions are modified to N6-acetyllysine: lysine 574 and lysine 824. Position 931 is a phosphoserine (serine 931).

It belongs to the XPO2/CSE1 family. As to quaternary structure, found in a complex with CSE1L/XPO2, Ran and KPNA2. Binds with high affinity to importin-alpha only in the presence of RanGTP. The complex is dissociated by the combined action of RanBP1 and RanGAP1. Interacts with CFTR. In terms of tissue distribution, ubiquitous. Detected in embryos from 5 to 17 dpc. Highly expressed in adult testis, heart, brain, lung, liver, skeletal muscle, spleen and kidney.

Its subcellular location is the cytoplasm. It localises to the nucleus. In terms of biological role, export receptor for importin-alpha. Mediates importin-alpha re-export from the nucleus to the cytoplasm after import substrates (cargos) have been released into the nucleoplasm. In the nucleus binds cooperatively to importin-alpha and to the GTPase Ran in its active GTP-bound form. Docking of this trimeric complex to the nuclear pore complex (NPC) is mediated through binding to nucleoporins. Upon transit of a nuclear export complex into the cytoplasm, disassembling of the complex and hydrolysis of Ran-GTP to Ran-GDP (induced by RANBP1 and RANGAP1, respectively) cause release of the importin-alpha from the export receptor. CSE1L/XPO2 then return to the nuclear compartment and mediate another round of transport. The directionality of nuclear export is thought to be conferred by an asymmetric distribution of the GTP- and GDP-bound forms of Ran between the cytoplasm and nucleus. This chain is Exportin-2 (Cse1l), found in Mus musculus (Mouse).